Consider the following 591-residue polypeptide: N-acetylgalactosaminyltransferase 7 (591 aa).

Residues 1–11 (MRVSTIRSGRI) are Cytoplasmic-facing. Residues 12-29 (CRLALCLLVLLPLLYLLA) form a helical; Signal-anchor for type II membrane protein membrane-spanning segment. Asparagine 30 carries N-linked (GlcNAc...) asparagine glycosylation. Topologically, residues 30–591 (NWSDHHKRVQ…WWFKEIRPRW (562 aa)) are lumenal. Positions 68–100 (DGLGNFEPKDVKPRSGPGENGEAHSLSPDKKHM) are disordered. 5 disulfide bridges follow: cysteine 132/cysteine 367, cysteine 358/cysteine 441, cysteine 479/cysteine 496, cysteine 519/cysteine 532, and cysteine 558/cysteine 573. The tract at residues 141–251 (LPRTSVIIVF…TNWLPPLLAP (111 aa)) is catalytic subdomain A. Substrate contacts are provided by aspartate 182 and arginine 212. Aspartate 235 and histidine 237 together coordinate Mn(2+). Residues 313 to 375 (PYRSPTHAGG…PCSRVGHVYR (63 aa)) form a catalytic subdomain B region. Position 344 (tryptophan 344) interacts with substrate. Histidine 372 is a Mn(2+) binding site. 2 residues coordinate substrate: arginine 375 and tyrosine 380. A Ricin B-type lectin domain is found at 466–585 (LHWGELRSVA…NDSYQQWWFK (120 aa)). Asparagine 576 is a glycosylation site (N-linked (GlcNAc...) asparagine).

This sequence belongs to the glycosyltransferase 2 family. GalNAc-T subfamily. Mn(2+) serves as cofactor. Expressed in developing oocytes and egg chambers. During embryonic stages 9-11, expressed in the primordium of the foregut, midgut and hindgut. Expressed in the salivary glands from embryonic stage 12 onwards. During embryonic stages 12-13, expressed in the posterior midgut and hindgut. During embryonic stages 14-15, expression continues in the hindgut. During embryonic stages 16-17, expressed in the antennomaxillary complex. In third instar larvae, ubiquitously expressed in wing, with increased expression in the notum and ventral wing pouch, eye-antennal, leg and haltere imaginal disks.

It localises to the golgi apparatus membrane. The enzyme catalyses L-seryl-[protein] + UDP-N-acetyl-alpha-D-galactosamine = a 3-O-[N-acetyl-alpha-D-galactosaminyl]-L-seryl-[protein] + UDP + H(+). It catalyses the reaction L-threonyl-[protein] + UDP-N-acetyl-alpha-D-galactosamine = a 3-O-[N-acetyl-alpha-D-galactosaminyl]-L-threonyl-[protein] + UDP + H(+). The protein operates within protein modification; protein glycosylation. In terms of biological role, glycopeptide transferase involved in O-linked oligosaccharide biosynthesis, which catalyzes the transfer of an N-acetyl-D-galactosamine residue to an already glycosylated peptide. In contrast to other proteins of the family, it does not act as a peptide transferase that transfers GalNAc onto serine or threonine residue on the protein receptor, but instead requires the prior addition of a GalNAc on a peptide before adding additional GalNAc moieties. Some peptide transferase activity is however not excluded, considering that its appropriate peptide substrate may remain unidentified. Prefers the monoglycosylated Muc5AC-3 as substrate. Might have a role in protein O-glycosylation in the Golgi and thereby in establishing and/or maintaining a proper secretory apparatus structure. The chain is N-acetylgalactosaminyltransferase 7 from Drosophila melanogaster (Fruit fly).